The primary structure comprises 109 residues: Spermidine export protein MdtI (109 aa).

A run of 4 helical transmembrane segments spans residues 6–26, 36–56, 64–84, and 88–108; these read WVHA…NVFL, IFGL…SQAV, AYAL…WILF, and LNRK…MVKL.

The protein belongs to the drug/metabolite transporter (DMT) superfamily. Small multidrug resistance (SMR) (TC 2.A.7.1) family. MdtI subfamily. In terms of assembly, forms a complex with MdtJ.

The protein resides in the cell inner membrane. Its function is as follows. Catalyzes the excretion of spermidine. The polypeptide is Spermidine export protein MdtI (Shigella dysenteriae serotype 1 (strain Sd197)).